Here is a 101-residue protein sequence, read N- to C-terminus: Small ribosomal subunit protein uS14 (101 aa).

Belongs to the universal ribosomal protein uS14 family. As to quaternary structure, part of the 30S ribosomal subunit. Contacts proteins S3 and S10.

Functionally, binds 16S rRNA, required for the assembly of 30S particles and may also be responsible for determining the conformation of the 16S rRNA at the A site. The protein is Small ribosomal subunit protein uS14 of Bartonella quintana (strain Toulouse) (Rochalimaea quintana).